The following is a 378-amino-acid chain: C-X-C chemokine receptor type 3-2 (378 aa).

The Extracellular portion of the chain corresponds to 1–47; the sequence is MDNSTTAAEVSAPTDYDYNSTSYDDDNPYAAPCSLTETWNFLGRFAP. 2 N-linked (GlcNAc...) asparagine glycosylation sites follow: N3 and N19. Residues 48-68 traverse the membrane as a helical segment; sequence VAYILVFILALVGNILVLCVI. The Cytoplasmic segment spans residues 69-86; it reads RRYRQSRHSPCSFSLTDT. Residues 87–107 form a helical membrane-spanning segment; sequence FLLHLAVSDLLLAATLPFFAV. Residues 108–121 are Extracellular-facing; sequence EWISEWVFGKVMCK. C120 and C199 form a disulfide bridge. A helical membrane pass occupies residues 122–142; the sequence is ITGALFSLNVYCGVLFLACIS. Residues 143–164 lie on the Cytoplasmic side of the membrane; that stretch reads FDRYLAIVHAINISWRRKTCHA. Residues 165–185 traverse the membrane as a helical segment; sequence QLACAFIWVICLGLSMVDMHF. Residues 186–212 are Extracellular-facing; that stretch reads RDLVEIPGMNRMVCQIVYSEQYSKQWQ. A helical membrane pass occupies residues 213–233; sequence IGMQLVSMVLGFILPLLVMLY. The Cytoplasmic segment spans residues 234–253; the sequence is CYLHIFKALCHATRRQKRRS. Residues 254 to 274 traverse the membrane as a helical segment; that stretch reads LRLIISLVIVFVISWAPYNAL. Residues 275 to 304 lie on the Extracellular side of the membrane; it reads RMTDSLQMLGVIVKSCALNNVLDVGILVTE. A helical transmembrane segment spans residues 305–325; that stretch reads SLGLAHCALNPLLYGLVGVKF. Topologically, residues 326-378 are cytoplasmic; sequence RRELAQMCKAALGPQGCLGLVGWANGRGSSTRRPTGSFSSVETENTSYFSVMA.

The protein belongs to the G-protein coupled receptor 1 family.

Its subcellular location is the cell membrane. Receptor for the C-X-C chemokines cxcl11.1 and cxcl11.6. Promotes macrophage chemotaxis to sites of bacterial infection. This is C-X-C chemokine receptor type 3-2 from Danio rerio (Zebrafish).